The following is a 260-amino-acid chain: Adenosylcobinamide-GDP ribazoletransferase (260 aa).

A run of 7 helical transmembrane segments spans residues Pro42–Ile62, Leu64–Leu84, Phe117–Ile137, Tyr144–Trp164, Gly192–Ile212, Ala214–Gly234, and Thr240–Leu260.

It belongs to the CobS family. Requires Mg(2+) as cofactor.

The protein resides in the cell inner membrane. The enzyme catalyses alpha-ribazole + adenosylcob(III)inamide-GDP = adenosylcob(III)alamin + GMP + H(+). The catalysed reaction is alpha-ribazole 5'-phosphate + adenosylcob(III)inamide-GDP = adenosylcob(III)alamin 5'-phosphate + GMP + H(+). It participates in cofactor biosynthesis; adenosylcobalamin biosynthesis; adenosylcobalamin from cob(II)yrinate a,c-diamide: step 7/7. In terms of biological role, joins adenosylcobinamide-GDP and alpha-ribazole to generate adenosylcobalamin (Ado-cobalamin). Also synthesizes adenosylcobalamin 5'-phosphate from adenosylcobinamide-GDP and alpha-ribazole 5'-phosphate. The protein is Adenosylcobinamide-GDP ribazoletransferase of Brucella abortus (strain S19).